Reading from the N-terminus, the 277-residue chain is Phosphate import ATP-binding protein PstB 2 (277 aa).

Positions 31 to 272 constitute an ABC transporter domain; the sequence is IEVPGLNLFY…PAKKQTEDYI (242 aa). Residue 63-70 participates in ATP binding; that stretch reads GPSGCGKS.

Belongs to the ABC transporter superfamily. Phosphate importer (TC 3.A.1.7) family. The complex is composed of two ATP-binding proteins (PstB), two transmembrane proteins (PstC and PstA) and a solute-binding protein (PstS).

Its subcellular location is the cell inner membrane. It catalyses the reaction phosphate(out) + ATP + H2O = ADP + 2 phosphate(in) + H(+). Its function is as follows. Part of the ABC transporter complex PstSACB involved in phosphate import. Responsible for energy coupling to the transport system. This Pseudomonas savastanoi pv. phaseolicola (strain 1448A / Race 6) (Pseudomonas syringae pv. phaseolicola (strain 1448A / Race 6)) protein is Phosphate import ATP-binding protein PstB 2.